The sequence spans 114 residues: Histone H2B (114 aa).

Positions 1–22 (MAKTPSKKAAKAPKKAGSKRNK) are disordered. Position 3 is an N6-acetyllysine (K3). K110 is covalently cross-linked (Glycyl lysine isopeptide (Lys-Gly) (interchain with G-Cter in ubiquitin)).

It belongs to the histone H2B family. As to quaternary structure, the nucleosome is a histone octamer containing two molecules each of H2A, H2B, H3 and H4 assembled in one H3-H4 heterotetramer and two H2A-H2B heterodimers. The octamer wraps approximately 147 bp of DNA. In terms of processing, monoubiquitination of Lys-110 gives a specific tag for epigenetic transcriptional activation and is also prerequisite for histone H3 'Lys-4' and 'Lys-79' methylation.

It localises to the nucleus. The protein localises to the chromosome. Functionally, core component of nucleosome. Nucleosomes wrap and compact DNA into chromatin, limiting DNA accessibility to the cellular machineries which require DNA as a template. Histones thereby play a central role in transcription regulation, DNA repair, DNA replication and chromosomal stability. DNA accessibility is regulated via a complex set of post-translational modifications of histones, also called histone code, and nucleosome remodeling. The sequence is that of Histone H2B from Olisthodiscus luteus (Marine phytoflagellate).